A 395-amino-acid chain; its full sequence is Multiple organellar RNA editing factor 8, chloroplastic/mitochondrial (395 aa).

A chloroplast and mitochondrion-targeting transit peptide spans 1–56; that stretch reads MATHTISRSILCRPAKSLSFLFTRSFASSAPLAKSPASSLLSRSRPLVAAFSSVFR. Positions 211–236 are enriched in basic and acidic residues; it reads ANERNRRNDRPRNNDRSRNFERRREN. The interval 211–395 is disordered; that stretch reads ANERNRRNDR…RDGSGNPYQG (185 aa). Over residues 240-300 the composition is skewed to pro residues; the sequence is GPPPQRPPMG…GPRHPPPYGA (61 aa). Positions 313–334 are enriched in low complexity; that stretch reads QNYGGTPPPNYGGAPPANNMGG. The span at 335–355 shows a compositional bias: pro residues; that stretch reads APPPNYGGGPPPQYGAVPPPQ. Residues 356 to 385 are compositionally biased toward low complexity; that stretch reads YGGAPPQNNNYQQQGSGMQQPQYQNNYPPN.

Belongs to the MORF family. Interacts with protoporphyrinogen oxidase 1 PPOX1. Interacts with PCMP-H52/MEF10. Homodimer and heterodimers with MORF1/RIP8, MORF2/RIP2, MORF3/RIP3, MORF4/RIP4, MORF5/RIP5, MORF6/RIP6 and MORF7/RIP7. Interacts with RBG3/ORRM3. Interacts with PCMP-A2/PMD1. Interacts with ORRM1 and VAT3/OZ1. Interacts with PCMP-H13/MEF35. Interacts with RBG5/ORRM4. Interacts with ORRM6.

It localises to the mitochondrion. The protein resides in the plastid. Its subcellular location is the chloroplast. In terms of biological role, involved in organellar RNA editing. Required for the processing of numerous RNA editing sites in mitochondria and plastids. Binds to the plastid RARE1 factor, a pentatricopeptide repeat-containing protein involved in RNA editing. The chain is Multiple organellar RNA editing factor 8, chloroplastic/mitochondrial from Arabidopsis thaliana (Mouse-ear cress).